The primary structure comprises 77 residues: U8-lycotoxin-Ls1i (77 aa).

The signal sequence occupies residues M1 to V20. Positions Q21–R26 are excised as a propeptide.

The protein belongs to the neurotoxin 19 (CSTX) family. 08 (U8-Lctx) subfamily. Post-translationally, contains 4 disulfide bonds. As to expression, expressed by the venom gland.

It localises to the secreted. In Lycosa singoriensis (Wolf spider), this protein is U8-lycotoxin-Ls1i.